Consider the following 741-residue polypeptide: 1,4-alpha-glucan branching enzyme GlgB 2 (741 aa).

The tract at residues 1 to 38 is disordered; sequence MALRDTSIPEPSGPVPPAPGACATAPPLDPTDRGRLLA. Asp-421 functions as the Nucleophile in the catalytic mechanism. Catalysis depends on Glu-474, which acts as the Proton donor.

It belongs to the glycosyl hydrolase 13 family. GlgB subfamily. In terms of assembly, monomer.

The catalysed reaction is Transfers a segment of a (1-&gt;4)-alpha-D-glucan chain to a primary hydroxy group in a similar glucan chain.. Its pathway is glycan biosynthesis; glycogen biosynthesis. Its function is as follows. Catalyzes the formation of the alpha-1,6-glucosidic linkages in glycogen by scission of a 1,4-alpha-linked oligosaccharide from growing alpha-1,4-glucan chains and the subsequent attachment of the oligosaccharide to the alpha-1,6 position. The chain is 1,4-alpha-glucan branching enzyme GlgB 2 (glgB2) from Streptomyces coelicolor (strain ATCC BAA-471 / A3(2) / M145).